The chain runs to 854 residues: Nucleolar MIF4G domain-containing protein 1 homolog (854 aa).

Disordered regions lie at residues Met1–Lys38, Gln55–Val105, Pro120–Ile161, and Arg217–Glu306. Positions Thr15 to Lys28 are enriched in basic and acidic residues. Positions Lys60–Lys71 are enriched in basic residues. Positions Ile88–Val105 are enriched in acidic residues. Composition is skewed to basic and acidic residues over residues Arg135 to Ser156 and Arg217 to Ala238. The span at Ser242–Glu289 shows a compositional bias: acidic residues. A compositionally biased stretch (basic and acidic residues) spans Asn290–Glu306. The MIF4G domain maps to Leu352 to Asn553. The region spanning Ala650–Phe764 is the MI domain.

Belongs to the CWC22 family.

Its subcellular location is the nucleus. It is found in the nucleolus. The sequence is that of Nucleolar MIF4G domain-containing protein 1 homolog from Drosophila melanogaster (Fruit fly).